A 790-amino-acid polypeptide reads, in one-letter code: Phenylalanine--tRNA ligase beta subunit (790 aa).

Positions 39 to 154 (PDSLNTVVTG…ADTPLGESAC (116 aa)) constitute a tRNA-binding domain. Residues 404 to 483 (FSPLSLSVRP…FVQKTQKILP (80 aa)) enclose the B5 domain. The Mg(2+) site is built by D457, D463, E466, and E467. The region spanning 694-790 (PIYPASSRDI…KLANIGQGNS (97 aa)) is the FDX-ACB domain.

It belongs to the phenylalanyl-tRNA synthetase beta subunit family. Type 1 subfamily. In terms of assembly, tetramer of two alpha and two beta subunits. Mg(2+) serves as cofactor.

The protein resides in the cytoplasm. It carries out the reaction tRNA(Phe) + L-phenylalanine + ATP = L-phenylalanyl-tRNA(Phe) + AMP + diphosphate + H(+). The chain is Phenylalanine--tRNA ligase beta subunit from Chlamydia trachomatis serovar A (strain ATCC VR-571B / DSM 19440 / HAR-13).